A 304-amino-acid polypeptide reads, in one-letter code: Probable WRKY transcription factor 29 (304 aa).

2 disordered regions span residues 76 to 96 (LPED…GCLL) and 185 to 236 (YTNE…IPSA). Over residues 78-88 (EDSKPFRDDKK) the composition is skewed to basic and acidic residues. A DNA-binding region (WRKY) is located at residues 128-194 (KEENLLSDAW…YTNEHNHELP (67 aa)). 2 stretches are compositionally biased toward polar residues: residues 196-213 (RRNS…QPKP) and 225-236 (SSPTSNPMIPSA).

This sequence belongs to the WRKY group II-e family.

The protein resides in the nucleus. Functionally, transcription factor involved in the expression of defense genes in innate immune response of plants. Interacts specifically with the W box (5'-(T)TGAC[CT]-3'), a frequently occurring elicitor-responsive cis-acting element. Activates WRKY 22, SIRK and its own promoters. The polypeptide is Probable WRKY transcription factor 29 (WRKY29) (Arabidopsis thaliana (Mouse-ear cress)).